Consider the following 336-residue polypeptide: MVKEFLKKISEGKHLNFEEAREIVLSIDREEITEAQLGAILLGLRLKGENPEEIAGFVDVLHEKAKKVPNKTPAIDVCGTGGDKSNTFNISTAVAFTLASLGIKVAKHGNRAMSSKAGSIDVIEALGFKCSDNPEEIAKDIDDKGIGIIFAPYFHPVVGKAVKVRRELGIGTIFNMAGPMLNPANLSGQILGVYSEKVMHRMAEASLILKKDNILFYHGKDDGIDEISLSGKTVFAYLKNSKIDYFEFSPEDIGVKRYQREDFNGGDAQENAKILENIFKGRAKEAHIDIVAVNSAFALWVLGKVKEVKEGFDMVKDHIMKGKVYEYIETLRGKTA.

5-phospho-alpha-D-ribose 1-diphosphate is bound by residues G79, 82–83 (GD), T87, 89–92 (NIST), 107–115 (KHGNRAMSS), and S119. G79 is an anthranilate binding site. S91 lines the Mg(2+) pocket. Anthranilate is bound at residue N110. Residue R165 participates in anthranilate binding. The Mg(2+) site is built by D225 and E226.

This sequence belongs to the anthranilate phosphoribosyltransferase family. In terms of assembly, homodimer. The cofactor is Mg(2+).

It catalyses the reaction N-(5-phospho-beta-D-ribosyl)anthranilate + diphosphate = 5-phospho-alpha-D-ribose 1-diphosphate + anthranilate. It participates in amino-acid biosynthesis; L-tryptophan biosynthesis; L-tryptophan from chorismate: step 2/5. In terms of biological role, catalyzes the transfer of the phosphoribosyl group of 5-phosphorylribose-1-pyrophosphate (PRPP) to anthranilate to yield N-(5'-phosphoribosyl)-anthranilate (PRA). The chain is Anthranilate phosphoribosyltransferase from Dictyoglomus turgidum (strain DSM 6724 / Z-1310).